Here is a 281-residue protein sequence, read N- to C-terminus: Urease accessory protein UreD 2 (281 aa).

The protein belongs to the UreD family. UreD, UreF and UreG form a complex that acts as a GTP-hydrolysis-dependent molecular chaperone, activating the urease apoprotein by helping to assemble the nickel containing metallocenter of UreC. The UreE protein probably delivers the nickel.

The protein localises to the cytoplasm. Its function is as follows. Required for maturation of urease via the functional incorporation of the urease nickel metallocenter. This Pseudomonas syringae pv. syringae (strain B728a) protein is Urease accessory protein UreD 2.